The chain runs to 199 residues: MAMVASPDDIVKSPLPPPPPPPPPPLPPAHKDKAAYNPYSGCPAHGGDDGLDGIVLVLRAAAALLALVAMALVASCRHGDWMEFTRYQEYRYLLGVAVVASLYSALQAARTFRRMRAGTAYAATFLDFAGDQAVGYLLITASSAALPITIRMRSAVVNTFTDVVAASISFAFLAFAALAFSALIAGFRLSSSSSSAYNY.

Residues 1–32 (MAMVASPDDIVKSPLPPPPPPPPPPLPPAHKD) are disordered. Over 1–53 (MAMVASPDDIVKSPLPPPPPPPPPPLPPAHKDKAAYNPYSGCPAHGGDDGLDG) the chain is Cytoplasmic. The span at 14–28 (PLPPPPPPPPPPLPP) shows a compositional bias: pro residues. Residues 54–74 (IVLVLRAAAALLALVAMALVA) form a helical membrane-spanning segment. Residues 75-91 (SCRHGDWMEFTRYQEYR) lie on the Extracellular side of the membrane. A helical transmembrane segment spans residues 92 to 112 (YLLGVAVVASLYSALQAARTF). The Cytoplasmic segment spans residues 113-127 (RRMRAGTAYAATFLD). Residues 128–148 (FAGDQAVGYLLITASSAALPI) traverse the membrane as a helical segment. The Extracellular portion of the chain corresponds to 149–163 (TIRMRSAVVNTFTDV). The chain crosses the membrane as a helical span at residues 164 to 184 (VAASISFAFLAFAALAFSALI). The Cytoplasmic portion of the chain corresponds to 185–199 (AGFRLSSSSSSAYNY).

The protein belongs to the Casparian strip membrane proteins (CASP) family. Homodimer and heterodimers.

It is found in the cell membrane. This Oryza sativa subsp. japonica (Rice) protein is CASP-like protein 4B1.